The following is a 622-amino-acid chain: Threonine--tRNA ligase (622 aa).

An editing domain region spans residues 1-141 (MKTLLIHSDY…SRKITTERKE (141 aa)). Positions 199 to 498 (PHVKYIKEKE…TLENRPPALP (300 aa)) are catalytic. Zn(2+)-binding residues include Cys-291, His-343, and His-467.

Belongs to the class-II aminoacyl-tRNA synthetase family. As to quaternary structure, homodimer. Zn(2+) is required as a cofactor.

The protein resides in the cytoplasm. It carries out the reaction tRNA(Thr) + L-threonine + ATP = L-threonyl-tRNA(Thr) + AMP + diphosphate + H(+). Catalyzes the attachment of threonine to tRNA(Thr) in a two-step reaction: L-threonine is first activated by ATP to form Thr-AMP and then transferred to the acceptor end of tRNA(Thr). Also edits incorrectly charged L-seryl-tRNA(Thr). In Methanococcus maripaludis (strain C6 / ATCC BAA-1332), this protein is Threonine--tRNA ligase.